A 445-amino-acid chain; its full sequence is Ribosomal protein uS12 methylthiotransferase RimO (445 aa).

One can recognise an MTTase N-terminal domain in the interval 6 to 121; sequence KKVAVVTLGC…ILETLEEAEK (116 aa). Positions 15, 50, 84, 159, 163, and 166 each coordinate [4Fe-4S] cluster. In terms of domain architecture, Radical SAM core spans 145–375; that stretch reads LSPKQYAYVK…MELQHDIAYE (231 aa). One can recognise a TRAM domain in the interval 378-445; that stretch reads QRWVGQTLKV…SYDLMGEVVQ (68 aa).

The protein belongs to the methylthiotransferase family. RimO subfamily. It depends on [4Fe-4S] cluster as a cofactor.

The protein localises to the cytoplasm. It catalyses the reaction L-aspartate(89)-[ribosomal protein uS12]-hydrogen + (sulfur carrier)-SH + AH2 + 2 S-adenosyl-L-methionine = 3-methylsulfanyl-L-aspartate(89)-[ribosomal protein uS12]-hydrogen + (sulfur carrier)-H + 5'-deoxyadenosine + L-methionine + A + S-adenosyl-L-homocysteine + 2 H(+). In terms of biological role, catalyzes the methylthiolation of an aspartic acid residue of ribosomal protein uS12. In Desulfitobacterium hafniense (strain Y51), this protein is Ribosomal protein uS12 methylthiotransferase RimO.